The chain runs to 459 residues: Periodic tryptophan protein 1 homolog (459 aa).

The interval Gly-44–Arg-84 is disordered. Acidic residues predominate over residues Gln-48–Val-73. The segment covering Asp-74–Arg-84 has biased composition (basic and acidic residues). WD repeat units lie at residues Leu-168–Pro-214, Gly-232–Thr-272, Ala-275–Ser-315, Lys-321–Trp-361, and Ala-365–Val-405. At Ser-385 the chain carries Phosphoserine.

It belongs to the WD repeat PWP1 family. Interacts with Mybbp1A. Post-translationally, phosphorylated in response to nutrient-activated TORC1 signaling. Detected in the germline of adult testis and ovary (at protein level). Detected in ovary somatic cells, in zfh1-positive cyst cells in the testis and absent in differentiated cyst cells (at protein level).

The protein localises to the nucleus. It localises to the nucleolus. Its subcellular location is the chromosome. It is found in the nucleoplasm. In terms of biological role, chromatin-associated factor that regulates transcription. Regulates Pol I-mediated rRNA biogenesis and, probably, Pol III-mediated transcription. Regulates the localization to the nucleolus of Cdk7, a regulator of the Pol I-elongation factor TFIIH. Acts as a regulator of cell proliferation and tissue growth as part of the TORC1 and Myc signaling pathway in response to nutrients. Required in males for both germline stem cell (GSC) maintenance and early stages of germ cell differentiation of germ cell cysts. Not required for female germline stem cell (GSC) maintenance, but necessary to regulate germ cell differentiation and egg chamber development. In female somatic cells, required for follicle stem cell survival and maintenance. This is Periodic tryptophan protein 1 homolog from Drosophila melanogaster (Fruit fly).